We begin with the raw amino-acid sequence, 203 residues long: Large ribosomal subunit protein uL13 (203 aa).

Position 2 is an N-acetylalanine (alanine 2). Arginine 59 carries the post-translational modification Citrulline. Phosphoserine is present on serine 77. Position 140 is a citrulline (arginine 140). N6-acetyllysine is present on lysine 191.

Belongs to the universal ribosomal protein uL13 family. Component of the 60S ribosome. Component of the GAIT complex. Interacts with EIF4G1. In terms of processing, phosphorylation at Ser-77 upon interferon-gamma treatment in macrophages involves a DAPK1-DAPK3 kinase cascade and is causing release from the ribosome, association with the GAIT complex and subsequent involvement in transcript-selective translation inhibition. Post-translationally, citrullinated by PADI4.

It localises to the cytoplasm. Functionally, associated with ribosomes but is not required for canonical ribosome function and has extra-ribosomal functions. Component of the GAIT (gamma interferon-activated inhibitor of translation) complex which mediates interferon-gamma-induced transcript-selective translation inhibition in inflammation processes. Upon interferon-gamma activation and subsequent phosphorylation dissociates from the ribosome and assembles into the GAIT complex which binds to stem loop-containing GAIT elements in the 3'-UTR of diverse inflammatory mRNAs (such as ceruplasmin) and suppresses their translation. In the GAIT complex interacts with m7G cap-bound eIF4G at or near the eIF3-binding site and blocks the recruitment of the 43S ribosomal complex. Involved in methylation of rRNA. The chain is Large ribosomal subunit protein uL13 (RPL13A) from Canis lupus familiaris (Dog).